We begin with the raw amino-acid sequence, 161 residues long: Mediator of RNA polymerase II transcription subunit 10 (161 aa).

The protein belongs to the Mediator complex subunit 10 family. Component of the Mediator complex.

It is found in the nucleus. Functionally, component of the Mediator complex, a coactivator involved in the regulated transcription of nearly all RNA polymerase II-dependent genes. Mediator functions as a bridge to convey information from gene-specific regulatory proteins to the basal RNA polymerase II transcription machinery. Mediator is recruited to promoters by direct interactions with regulatory proteins and serves as a scaffold for the assembly of a functional preinitiation complex with RNA polymerase II and the general transcription factors. The polypeptide is Mediator of RNA polymerase II transcription subunit 10 (NUT2) (Kluyveromyces lactis (strain ATCC 8585 / CBS 2359 / DSM 70799 / NBRC 1267 / NRRL Y-1140 / WM37) (Yeast)).